A 396-amino-acid polypeptide reads, in one-letter code: Inositol polyphosphate multikinase (396 aa).

Positions 1–13 are enriched in low complexity; it reads MAAEPPALRLRPP. The tract at residues 1–22 is disordered; the sequence is MAAEPPALRLRPPGSTGDSPPV. Alanine 2 bears the N-acetylalanine mark. Serine 19 carries the post-translational modification Phosphoserine. Lysine 58 provides a ligand contact to ATP. Residue arginine 65 coordinates substrate. ATP is bound by residues 114–116 and aspartate 127; that span reads EDV. Substrate contacts are provided by residues lysine 129, 143–150, and glutamine 179; that span reads KIQQQVSK. A Nuclear localization signal motif is present at residues 300 to 310; sequence RHRKLYAKKHQ. Position 365 (aspartate 365) interacts with ATP.

Belongs to the inositol phosphokinase (IPK) family. The cofactor is Mg(2+). In terms of tissue distribution, highly expressed in kidney, and at lower levels in hippocampus, brain cortex, cerebellum, heart and lung.

Its subcellular location is the nucleus. The enzyme catalyses 1D-myo-inositol 1,4,5-trisphosphate + 2 ATP = 1D-myo-inositol 1,3,4,5,6-pentakisphosphate + 2 ADP + 2 H(+). It carries out the reaction 1D-myo-inositol 1,3,4,6-tetrakisphosphate + ATP = 1D-myo-inositol 1,3,4,5,6-pentakisphosphate + ADP + H(+). The catalysed reaction is 1-octadecanoyl-2-(5Z,8Z,11Z,14Z)-eicosatetraenoyl-sn-glycero-3-phospho-1D-myo-inositol 4,5-bisphosphate + ATP = 1-octadecanoyl-2-(5Z,8Z,11Z,14Z-eicosatetraenoyl)-sn-glycero-3-phospho-(1D-myo-inositol 3,4,5-triphosphate) + ADP + H(+). It catalyses the reaction a 1,2-diacyl-sn-glycero-3-phospho-(1D-myo-inositol-4,5-bisphosphate) + ATP = a 1,2-diacyl-sn-glycero-3-phospho-(1D-myo-inositol-3,4,5-trisphosphate) + ADP + H(+). The enzyme catalyses 1D-myo-inositol 1,4,5,6-tetrakisphosphate + ATP = 1D-myo-inositol 1,3,4,5,6-pentakisphosphate + ADP + H(+). It functions in the pathway phospholipid metabolism; phosphatidylinositol metabolism. Inositol phosphate kinase with a broad substrate specificity. Phosphorylates inositol 1,4,5-trisphosphate (Ins(1,4,5)P3) first to inositol 1,3,4,5-tetrakisphosphate and then to inositol 1,3,4,5,6-pentakisphosphate (Ins(1,3,4,5,6)P5). Phosphorylates inositol 1,3,4,6-tetrakisphosphate (Ins(1,3,4,6)P4). Phosphorylates inositol 1,4,5,6-tetrakisphosphate (Ins(1,4,5,6)P4). Phosphorylates glycero-3-phospho-1D-myo-inositol 4,5-bisphosphate to glycero-3-phospho-1D-myo-inositol 3,4,5-trisphosphate. Plays an important role in MLKL-mediated necroptosis via its role in the biosynthesis of inositol pentakisphosphate (InsP5) and inositol hexakisphosphate (InsP6). Binding of these highly phosphorylated inositol phosphates to MLKL mediates the release of an N-terminal auto-inhibitory region, leading to activation of the kinase. Essential for activated phospho-MLKL to oligomerize and localize to the cell membrane during necroptosis. Required for normal embryonic development, probably via its role in the biosynthesis of inositol 1,3,4,5,6-pentakisphosphate (Ins(1,3,4,5,6)P5) and inositol hexakisphosphate (InsP6). The polypeptide is Inositol polyphosphate multikinase (Ipmk) (Rattus norvegicus (Rat)).